The sequence spans 771 residues: Receptor like protein 22 (771 aa).

Positions 1 to 20 (MSNLRLRLLSLVSILYCIAA) are cleaved as a signal peptide. The Extracellular portion of the chain corresponds to 21 to 729 (LRCRPDQTET…EEEEILEWRA (709 aa)). N-linked (GlcNAc...) asparagine glycosylation is found at asparagine 46, asparagine 58, asparagine 80, asparagine 93, asparagine 134, and asparagine 158. 12 LRR repeats span residues 86-110 (LSHL…AFGQ), 112-135 (NNLE…IRNL), 136-159 (TKLT…VQNL), 160-183 (TKLL…FFTM), 185-206 (FLSY…SNSS), 207-230 (SKLE…VLRL), 232-254 (NLRY…IFSP), 255-281 (LQSL…DFPK), 283-303 (MEIL…LKSL), 304-327 (KKLW…IWSL), 329-350 (LLVS…LDHV), and 353-377 (NSSV…PVSI). Asparagine 204 carries N-linked (GlcNAc...) asparagine glycosylation. N-linked (GlcNAc...) asparagine glycosylation is present at asparagine 242. A glycan (N-linked (GlcNAc...) asparagine) is linked at asparagine 292. Residues asparagine 337, asparagine 344, asparagine 353, asparagine 379, asparagine 384, asparagine 397, asparagine 410, asparagine 421, asparagine 466, and asparagine 481 are each glycosylated (N-linked (GlcNAc...) asparagine). One copy of the LRR 13; degenerate repeat lies at 378–397 (INLSAWNNSFTGDIPLSVCN). LRR repeat units lie at residues 398-419 (RTSL…PPCM), 420-443 (GNFT…FYSG), 445-467 (LTQT…LLNC), 469-491 (FIRF…LKAL), 492-516 (PNLK…DQSS), 519-543 (FPKL…YFAN), 588-612 (LTFY…IGLL), 613-636 (KTLI…FANV), 637-660 (TELE…LGRL), and 662-685 (YLAY…QIIG). The N-linked (GlcNAc...) asparagine glycan is linked to asparagine 543. N-linked (GlcNAc...) asparagine glycosylation is found at asparagine 619, asparagine 622, and asparagine 635. Residues 730-750 (AAIGYGPGVLFGLAIGHVVAL) traverse the membrane as a helical segment. Residues 751–771 (YKPGWFIKNNGQNRLRGIRHP) lie on the Cytoplasmic side of the membrane.

It belongs to the RLP family.

It localises to the cell membrane. The protein is Receptor like protein 22 of Arabidopsis thaliana (Mouse-ear cress).